We begin with the raw amino-acid sequence, 215 residues long: MSKAIVLDSHLKEKGSVELPKRYESINSHNLYLYVKHYLSSARANTAKSKNRAEVSGGGRKPWAQKGGGRARAGSITSPVFVGGGVSHGATNNRNYNLKINKKQKRLALEYALEEKAQANKLFVVEKIAIKGVVEDNKRKHLTKEANQMFQALEQRDTLFVCMNMDEYTELAFSNLKKCLIVDVSELNAYLLAAFSSVVMEEAAFQHVVQDKTEE.

Positions 46–72 are disordered; it reads TAKSKNRAEVSGGGRKPWAQKGGGRAR. Gly residues predominate over residues 56-71; it reads SGGGRKPWAQKGGGRA.

Belongs to the universal ribosomal protein uL4 family. In terms of assembly, part of the 50S ribosomal subunit.

Functionally, one of the primary rRNA binding proteins, this protein initially binds near the 5'-end of the 23S rRNA. It is important during the early stages of 50S assembly. It makes multiple contacts with different domains of the 23S rRNA in the assembled 50S subunit and ribosome. In terms of biological role, forms part of the polypeptide exit tunnel. The protein is Large ribosomal subunit protein uL4 of Helicobacter pylori (strain ATCC 700392 / 26695) (Campylobacter pylori).